Reading from the N-terminus, the 335-residue chain is Interleukin-12 subunit beta (335 aa).

An N-terminal signal peptide occupies residues 1–22 (MCPQKLTISWFAIVLLVSPLMA). The Ig-like C2-type domain maps to 23 to 106 (MWELEKDVYV…LSHSHLLLHK (84 aa)). N-linked (GlcNAc...) asparagine glycosylation occurs at Asn47. A disulfide bond links Cys50 and Cys90. Residues Asn122, Asn132, and Asn220 are each glycosylated (N-linked (GlcNAc...) asparagine). Residues 233–324 (PDPPKNLQMK…QDRYYNSSCS (92 aa)) form the Fibronectin type-III domain.

Belongs to the IL-12B family. As to quaternary structure, heterodimer with IL12A; disulfide-linked. The heterodimer is known as interleukin IL-12. Heterodimer with IL23A; disulfide-linked. The heterodimer is known as interleukin IL-23. Also secreted as a monomer. Interacts with NBR1; this interaction promotes IL-12 secretion.

The protein localises to the secreted. Cytokine that can act as a growth factor for activated T and NK cells, enhance the lytic activity of NK/lymphokine-activated killer cells, and stimulate the production of IFN-gamma by resting PBMC. In terms of biological role, associates with IL23A to form the IL-23 interleukin, a heterodimeric cytokine which functions in innate and adaptive immunity. IL-23 may constitute with IL-17 an acute response to infection in peripheral tissues. IL-23 binds to a heterodimeric receptor complex composed of IL12RB1 and IL23R, activates the Jak-Stat signaling cascade, stimulates memory rather than naive T-cells and promotes production of pro-inflammatory cytokines. IL-23 induces autoimmune inflammation and thus may be responsible for autoimmune inflammatory diseases and may be important for tumorigenesis. This Mus musculus (Mouse) protein is Interleukin-12 subunit beta (Il12b).